A 1205-amino-acid polypeptide reads, in one-letter code: Plasma membrane calcium-transporting ATPase 1 (1205 aa).

The Cytoplasmic portion of the chain corresponds to 2–104; it reads GDMANNSVAY…KTFLQLVWEA (103 aa). Residues 94 to 111 are calmodulin-binding subdomain A; it reads PKTFLQLVWEALQDVTLI. A helical membrane pass occupies residues 105–125; it reads LQDVTLIILEIAAVVSLGLSF. Residues 126–153 are Extracellular-facing; that stretch reads YQPPGGNEALCGSVNVGEEEEESEAGWI. Residues 154 to 174 form a helical membrane-spanning segment; it reads EGAAILLSVVCVVLVTAFNDW. Residues 175–351 lie on the Cytoplasmic side of the membrane; it reads SKEKQFRGLQ…KEKSVLQGKL (177 aa). The interval 296–343 is disordered; the sequence is EEEKEKEKKDKKTKAQDGAAMEMQPLKSEDGVDGDEKDKKRSNLPKKE. Composition is skewed to basic and acidic residues over residues 300–310 and 322–343; these read EKEKKDKKTKA and KSED…PKKE. The helical transmembrane segment at 352 to 371 threads the bilayer; it reads TKLAVQIGKAGLLMSAITVI. Over 372–403 the chain is Extracellular; that stretch reads ILVLYFVIDTSWVQKRPWLAECTPIYIQYFVK. Residues 404 to 424 form a helical membrane-spanning segment; sequence FFIIGVTVLVVAVPEGLPLAV. At 425–840 the chain is on the cytoplasmic side; sequence TISLAYSVKK…RNVYDSISKF (416 aa). The active-site 4-aspartylphosphate intermediate is the D460. The Mg(2+) site is built by D460, T462, and D782. The chain crosses the membrane as a helical span at residues 841-861; that stretch reads LQFQLTVNVVAVIVAFTGACI. Topologically, residues 862 to 868 are extracellular; that stretch reads TQDSPLK. Residues 869–889 traverse the membrane as a helical segment; sequence AVQMLWVNLIMDTLASLALAT. Residues 890 to 912 are Cytoplasmic-facing; it reads EPPTEALLLRKPYGRNKPLISRT. A helical membrane pass occupies residues 913-933; the sequence is MMKNILGHAFYQLVVVFTLLF. Residues 934-956 are Extracellular-facing; that stretch reads AGEKIFDIDSGRNAPLHAPPSEH. The chain crosses the membrane as a helical span at residues 957–976; that stretch reads YTIVFNTFVMMQLFNEINAR. Residues 977–990 are Cytoplasmic-facing; it reads KIHGERNVFEGIFN. The chain crosses the membrane as a helical span at residues 991 to 1012; that stretch reads NAIFCTIVLGTFVVQIIIVQFG. At 1013–1024 the chain is on the extracellular side; it reads GKPFSCSKLSIE. The helical transmembrane segment at 1025–1045 threads the bilayer; sequence QWLWSVFLGMGTLLWGQLIST. Residues 1046–1205 lie on the Cytoplasmic side of the membrane; sequence IPTSRLKFLK…SPLHSLETSL (160 aa). T1101 bears the Phosphothreonine; by PKC mark. Residues 1145–1205 are disordered; sequence PLIDDTDAED…SPLHSLETSL (61 aa). Residues 1183-1205 show a composition bias toward polar residues; sequence TDMNKSATSSSPGSPLHSLETSL.

This sequence belongs to the cation transport ATPase (P-type) (TC 3.A.3) family. Type IIB subfamily.

The protein resides in the cell membrane. The catalysed reaction is Ca(2+)(in) + ATP + H2O = Ca(2+)(out) + ADP + phosphate + H(+). Functionally, catalyzes the hydrolysis of ATP coupled with the transport of calcium from the cytoplasm to the extracellular space thereby maintaining intracellular calcium homeostasis. The protein is Plasma membrane calcium-transporting ATPase 1 of Gallus gallus (Chicken).